Consider the following 141-residue polypeptide: Hemoglobin subunit alpha-A (141 aa).

Positions 1 to 141 (VLSAADKTNV…VGAVLTAKYR (141 aa)) constitute a Globin domain. O2 is bound at residue histidine 58. Histidine 87 serves as a coordination point for heme b.

This sequence belongs to the globin family. Heterotetramer of two alpha chains and two beta chains. In terms of tissue distribution, red blood cells.

Its function is as follows. Involved in oxygen transport from the lung to the various peripheral tissues. This is Hemoglobin subunit alpha-A (HBAA) from Cygnus olor (Mute swan).